The chain runs to 405 residues: Elongation factor Tu (405 aa).

In terms of domain architecture, tr-type G spans 10–215 (KPHVNVGTIG…AIDAYIPTPE (206 aa)). Residues 19–26 (GHVDHGKT) are G1. 19 to 26 (GHVDHGKT) is a GTP binding site. Threonine 26 contacts Mg(2+). The interval 61–65 (GITIN) is G2. The interval 82 to 85 (DCPG) is G3. GTP-binding positions include 82–86 (DCPGH) and 137–140 (NKVD). The G4 stretch occupies residues 137-140 (NKVD). A G5 region spans residues 175-177 (SAL).

Belongs to the TRAFAC class translation factor GTPase superfamily. Classic translation factor GTPase family. EF-Tu/EF-1A subfamily. Monomer.

Its subcellular location is the cytoplasm. The catalysed reaction is GTP + H2O = GDP + phosphate + H(+). In terms of biological role, GTP hydrolase that promotes the GTP-dependent binding of aminoacyl-tRNA to the A-site of ribosomes during protein biosynthesis. The sequence is that of Elongation factor Tu from Deinococcus geothermalis (strain DSM 11300 / CIP 105573 / AG-3a).